Here is a 491-residue protein sequence, read N- to C-terminus: Glycogen synthase 2 (491 aa).

Residue Lys16 coordinates ADP-alpha-D-glucose.

This sequence belongs to the glycosyltransferase 1 family. Bacterial/plant glycogen synthase subfamily.

The catalysed reaction is [(1-&gt;4)-alpha-D-glucosyl](n) + ADP-alpha-D-glucose = [(1-&gt;4)-alpha-D-glucosyl](n+1) + ADP + H(+). It participates in glycan biosynthesis; glycogen biosynthesis. Functionally, synthesizes alpha-1,4-glucan chains using ADP-glucose. In Nitrosococcus oceani (strain ATCC 19707 / BCRC 17464 / JCM 30415 / NCIMB 11848 / C-107), this protein is Glycogen synthase 2.